The chain runs to 206 residues: Smr domain-containing protein C11H11.03c (206 aa).

Residues 75 to 150 form the Smr domain; that stretch reads IDLHGLYIDE…NEGRIYVYLP (76 aa).

It is found in the cytoplasm. Its subcellular location is the nucleus. In Schizosaccharomyces pombe (strain 972 / ATCC 24843) (Fission yeast), this protein is Smr domain-containing protein C11H11.03c.